The chain runs to 152 residues: Cell division protein SepF (152 aa).

This sequence belongs to the SepF family. As to quaternary structure, homodimer. Interacts with FtsZ.

The protein localises to the cytoplasm. Cell division protein that is part of the divisome complex and is recruited early to the Z-ring. Probably stimulates Z-ring formation, perhaps through the cross-linking of FtsZ protofilaments. Its function overlaps with FtsA. This Listeria monocytogenes serotype 4b (strain CLIP80459) protein is Cell division protein SepF.